We begin with the raw amino-acid sequence, 603 residues long: Penicillin-binding protein activator LpoA (603 aa).

A signal peptide spans 1–26; that stretch reads MAMNHHQRRSVPRLLTPIALSIVLSA. Residue C27 is the site of N-palmitoyl cysteine attachment. C27 carries S-diacylglycerol cysteine lipidation.

Belongs to the LpoA family. As to quaternary structure, interacts with PBP1a.

Its subcellular location is the cell outer membrane. In terms of biological role, regulator of peptidoglycan synthesis that is essential for the function of penicillin-binding protein 1A (PBP1a). This is Penicillin-binding protein activator LpoA from Vibrio cholerae serotype O1 (strain ATCC 39541 / Classical Ogawa 395 / O395).